The following is a 308-amino-acid chain: Olfactory receptor 6F1 (308 aa).

The Extracellular portion of the chain corresponds to 1–25 (MDTGNKTLPQDFLLLGFPGSQTLQL). Residue Asn5 is glycosylated (N-linked (GlcNAc...) asparagine). The helical transmembrane segment at 26 to 46 (SLFMLFLVMYILTVSGNVAIL) threads the bilayer. At 47 to 54 (MLVSTSHQ) the chain is on the cytoplasmic side. Residues 55–75 (LHTPMYFFLSNLSFLEIWYTT) form a helical membrane-spanning segment. At 76 to 99 (AAVPKALAILLGRSQTISFTSCLL) the chain is on the extracellular side. Residues Cys97 and Cys189 are joined by a disulfide bond. A helical transmembrane segment spans residues 100–120 (QMYFVFSLGCTEYFLLAAMAY). The Cytoplasmic portion of the chain corresponds to 121-139 (DRCLAICYPLHYGAIMSSL). Residues 140 to 160 (LSAQLALGSWVCGFVAIAVPT) traverse the membrane as a helical segment. The Extracellular portion of the chain corresponds to 161–197 (ALISGLSFCGPRAINHFFCDIAPWIALACTNTQAVEL). The chain crosses the membrane as a helical span at residues 198–217 (VAFVIAVVVILSSCLITFVS). The Cytoplasmic segment spans residues 218–237 (YVYIISTILRIPSASGRSKA). The chain crosses the membrane as a helical span at residues 238–258 (FSTCSSHLTVVLIWYGSTVFL). Over 259–271 (HVRTSIKDALDLI) the chain is Extracellular. Residues 272–292 (KAVHVLNTVVTPVLNPFIYTL) form a helical membrane-spanning segment. Topologically, residues 293 to 308 (RNKEVRETLLKKWKGK) are cytoplasmic.

Belongs to the G-protein coupled receptor 1 family.

It localises to the cell membrane. Functionally, odorant receptor. In Homo sapiens (Human), this protein is Olfactory receptor 6F1 (OR6F1).